Here is a 164-residue protein sequence, read N- to C-terminus: Transcription factor E (164 aa).

The HTH TFE/IIEalpha-type domain occupies 5-87 (NDKVIRGYLL…LWRLDFSDIE (83 aa)).

It belongs to the TFE family. As to quaternary structure, monomer. Interaction with RNA polymerase subunits RpoF and RpoE is necessary for Tfe stimulatory transcription activity. Able to interact with Tbp and RNA polymerase in the absence of DNA promoter. Interacts both with the preinitiation and elongation complexes.

Transcription factor that plays a role in the activation of archaeal genes transcribed by RNA polymerase. Facilitates transcription initiation by enhancing TATA-box recognition by TATA-box-binding protein (Tbp), and transcription factor B (Tfb) and RNA polymerase recruitment. Not absolutely required for transcription in vitro, but particularly important in cases where Tbp or Tfb function is not optimal. It dynamically alters the nucleic acid-binding properties of RNA polymerases by stabilizing the initiation complex and destabilizing elongation complexes. Seems to translocate with the RNA polymerase following initiation and acts by binding to the non template strand of the transcription bubble in elongation complexes. This Methanosarcina barkeri (strain Fusaro / DSM 804) protein is Transcription factor E.